A 1191-amino-acid polypeptide reads, in one-letter code: Serine/threonine-protein kinase dkf-2 (1191 aa).

Disordered stretches follow at residues Y11–S48 and M108–V155. Positions T123–P139 are enriched in basic and acidic residues. Low complexity predominate over residues S140 to S150. 2 Phorbol-ester/DAG-type zinc fingers span residues P314–C364 and P466–C531. The interval V549 to A594 is disordered. Positions L632–D713 constitute a PH domain. The interval P730–S786 is disordered. Positions S738 to V751 are enriched in low complexity. The span at G756–V765 shows a compositional bias: polar residues. A compositionally biased stretch (low complexity) spans S773–S786. The Protein kinase domain maps to I891–M1147. ATP-binding positions include L897–V905 and K920. The active-site Proton acceptor is the D1014. S1046 and S1050 each carry phosphoserine.

Belongs to the protein kinase superfamily. CAMK Ser/Thr protein kinase family. PKD subfamily. It depends on Mg(2+) as a cofactor. In terms of processing, phosphorylation on Ser-1046 is the dominant regulator of catalysis, phosphorylation on Ser-1050 has a lesser effect. Prolonged phosphorylation results in ubiquitination and degradation.

Its subcellular location is the cytoplasm. It localises to the membrane. It catalyses the reaction L-seryl-[protein] + ATP = O-phospho-L-seryl-[protein] + ADP + H(+). The catalysed reaction is L-threonyl-[protein] + ATP = O-phospho-L-threonyl-[protein] + ADP + H(+). With respect to regulation, activated by DAG and phorbol esters. Phorbol-ester/DAG-type domain 1 binds phorbol ester with low affinity. Phorbol-ester/DAG-type domain 2 binds phorbol ester with high affinity and targets the kinase to the cell periphery, enabling phosphorylation and activation by colocalized tpa-1. Both domains 1 and 2 appear to bind DAG with equal affinity so may contribute equally to translocation and activation. Functionally, converts transient diacylglycerol (DAG) signals into prolonged physiological effects, downstream of PKC. Acts in the intestine to regulate both innate immunity by promoting activation of pmk-1 and also stress response and life span by acting as an upstream, negative regulator of the daf-16 transcription factor. The chain is Serine/threonine-protein kinase dkf-2 from Caenorhabditis briggsae.